The sequence spans 89 residues: Small ribosomal subunit protein uS15 (89 aa).

The protein belongs to the universal ribosomal protein uS15 family. In terms of assembly, part of the 30S ribosomal subunit. Forms a bridge to the 50S subunit in the 70S ribosome, contacting the 23S rRNA.

Its function is as follows. One of the primary rRNA binding proteins, it binds directly to 16S rRNA where it helps nucleate assembly of the platform of the 30S subunit by binding and bridging several RNA helices of the 16S rRNA. Forms an intersubunit bridge (bridge B4) with the 23S rRNA of the 50S subunit in the ribosome. This chain is Small ribosomal subunit protein uS15, found in Methylocella silvestris (strain DSM 15510 / CIP 108128 / LMG 27833 / NCIMB 13906 / BL2).